The following is an 875-amino-acid chain: ATP-dependent helicase Lhr-Core (875 aa).

The ATP site is built by Gln35, Lys58, Thr59, Asp173, Glu174, Ile355, Arg372, and His375. Residues 39–230 (IPLIKQNYNV…FLVGKDREYR (192 aa)) form the Helicase ATP-binding domain. The short motif at 173-176 (DEIH) is the DEIH box element. One can recognise a Helicase C-terminal domain in the interval 247–419 (PVKDLVHSSE…SIHIPKNPLD (173 aa)). The tract at residues 420 to 506 (VLSQIIVSAS…IFYTNSGTIP (87 aa)) is WH domain. Positions 507 to 875 (DEAMISVVTE…VNIELEYTSV (369 aa)) are domain 4.

This sequence belongs to the Lhr helicase family. Lhr-Core subfamily. As to quaternary structure, monomer and homodimer. The monomeric form has helicase, ATPase and strand annealing activities, while the dimeric form only has ATPAse and strand annealing activities. Interacts with DNA topoisomerase 3 (topA).

The enzyme catalyses Couples ATP hydrolysis with the unwinding of duplex DNA by translocating in the 3'-5' direction.. It catalyses the reaction ATP + H2O = ADP + phosphate + H(+). Its activity is regulated as follows. DNA topoisomerase 3 (topA) inhibits helicase activity on Holliday junctions (HJ) but has no effect on ATPase activity. DNA helicase that translocates in a 3'-5' direction on single-stranded (ss)DNA, probably involved in DNA repair. Unwinds DNA in a 3'-5' direction, unwinding is ATP-dependent, acts preferentially on fork and 3'-tailed DNA; bubble and blunt-ended double-stranded (ds)DNA are not substrates. Has winding and unwinding activity, unwinds Holliday junction (HJ) DNA in the presence of ATP, the main product is forked DNA, single-stranded binding protein (SSB) does not stimulate activity. Anneals complementary oligonucleotides in an ATP-independent manner to form HJ and fork structures, thus can perform strand exchange. Preferentially binds HJ, forked and ssDNA, dsDNA is bound less well. LhrC-Core (Hel112) inhibits the exonuclease activity of the HerA-NurA complex on ss- and dsDNA, has no effect on ssDNA nicking by NurA; HerA-NurA are involved in DNA end-resection during DNA double-strand break repair. This Saccharolobus solfataricus (strain ATCC 35092 / DSM 1617 / JCM 11322 / P2) (Sulfolobus solfataricus) protein is ATP-dependent helicase Lhr-Core.